The following is an 88-amino-acid chain: LYR motif-containing protein 2 (88 aa).

Residues 1 to 19 (MAASRLPPAALTLKQFMRR) constitute a mitochondrion transit peptide.

Belongs to the complex I LYR family.

It is found in the mitochondrion. Functionally, involved in efficient integration of the N-module into mitochondrial respiratory chain complex I. This chain is LYR motif-containing protein 2 (Lyrm2), found in Mus musculus (Mouse).